A 456-amino-acid chain; its full sequence is MGYFRCARAGSFGRRRKMEPSTAARAWALFWLLLPLLGAVCASGPRTLVLLDNLNVRETHSLFFRSLKDRGFELTFKTADDPSLSLIKYGEFLYDNLIIFSPSVEDFGGNINVETISAFIDGGGSVLVAASSDIGDPLRELGSECGIEFDEEKTAVIDHHNYDISDLGQHTLIVADTENLLKAPTIVGKSSLNPILFRGVGMVADPDNPLVLDILTGSSTSYSFFPDKPITQYPHAVGKNTLLIAGLQARNNARVIFSGSLDFFSDSFFNSAVQKAAPGSQRYSQTGNYELAVALSRWVFKEEGVLRVGPVSHHRVGETAPPNAYTVTDLVEYSIVIQQLSNGKWVPFDGDDIQLEFVRIDPFVRTFLKKKGGKYSVQFKLPDVYGVFQFKVDYNRLGYTHLYSSTQVSVRPLQHTQYERFIPSAYPYYASAFSMMLGLFIFSIVFLHMKEKEKSD.

Residues 1-42 (MGYFRCARAGSFGRRRKMEPSTAARAWALFWLLLPLLGAVCA) form the signal peptide. At 43–427 (SGPRTLVLLD…YERFIPSAYP (385 aa)) the chain is on the lumenal side. A helical transmembrane segment spans residues 428 to 447 (YYASAFSMMLGLFIFSIVFL). The Cytoplasmic portion of the chain corresponds to 448-456 (HMKEKEKSD).

Belongs to the DDOST 48 kDa subunit family. As to quaternary structure, component of the oligosaccharyltransferase (OST) complex. OST exists in two different complex forms which contain common core subunits RPN1, RPN2, OST48, OST4, DAD1 and TMEM258, either STT3A or STT3B as catalytic subunits, and form-specific accessory subunits. STT3A complex assembly occurs through the formation of 3 subcomplexes. Subcomplex 1 contains RPN1 and TMEM258, subcomplex 2 contains the STT3A-specific subunits STT3A, DC2/OSTC, and KCP2 as well as the core subunit OST4, and subcomplex 3 contains RPN2, DAD1, and OST48. The STT3A complex can form stable complexes with the Sec61 complex or with both the Sec61 and TRAP complexes. Interacts with SMIM22.

The protein localises to the endoplasmic reticulum membrane. It functions in the pathway protein modification; protein glycosylation. Subunit of the oligosaccharyl transferase (OST) complex that catalyzes the initial transfer of a defined glycan (Glc(3)Man(9)GlcNAc(2) in eukaryotes) from the lipid carrier dolichol-pyrophosphate to an asparagine residue within an Asn-X-Ser/Thr consensus motif in nascent polypeptide chains, the first step in protein N-glycosylation. N-glycosylation occurs cotranslationally and the complex associates with the Sec61 complex at the channel-forming translocon complex that mediates protein translocation across the endoplasmic reticulum (ER). All subunits are required for a maximal enzyme activity. Required for the assembly of both SST3A- and SS3B-containing OST complexes. The sequence is that of Dolichyl-diphosphooligosaccharide--protein glycosyltransferase 48 kDa subunit from Homo sapiens (Human).